The sequence spans 892 residues: Translation initiation factor IF-2 (892 aa).

2 stretches are compositionally biased toward basic and acidic residues: residues 93–159 and 166–216; these read VKRD…KDKV and DMTK…EENK. The disordered stretch occupies residues 93 to 304; it reads VKRDPQEAER…SSLQQGFQKP (212 aa). Residues 254–269 are compositionally biased toward basic residues; it reads GRGRNAKAARPAKKGK. The span at 270 to 282 shows a compositional bias: basic and acidic residues; it reads HAESKADREEARA. A tr-type G domain is found at 391-560; it reads PRAPVVTIMG…LLQAEVLELK (170 aa). The segment at 400 to 407 is G1; the sequence is GHVDHGKT. 400-407 provides a ligand contact to GTP; it reads GHVDHGKT. A G2 region spans residues 425–429; that stretch reads GITQH. Residues 446 to 449 form a G3 region; sequence DTPG. Residues 446-450 and 500-503 contribute to the GTP site; these read DTPGH and NKID. Positions 500 to 503 are G4; the sequence is NKID. The tract at residues 536–538 is G5; the sequence is SAK.

Belongs to the TRAFAC class translation factor GTPase superfamily. Classic translation factor GTPase family. IF-2 subfamily.

The protein resides in the cytoplasm. Its function is as follows. One of the essential components for the initiation of protein synthesis. Protects formylmethionyl-tRNA from spontaneous hydrolysis and promotes its binding to the 30S ribosomal subunits. Also involved in the hydrolysis of GTP during the formation of the 70S ribosomal complex. This is Translation initiation factor IF-2 from Salmonella gallinarum (strain 287/91 / NCTC 13346).